The chain runs to 99 residues: MAEGGFDPCECVCSHEHAMRRLINLLRQSQSYCTDTECLQELPGPSSDNGISITMILMAWMVIAVILFLLRPPNLRGSNLTGKPASPHNGQDPPAPPVD.

Residues Met1–Asn49 lie on the Lumenal side of the membrane. Residues Gly50–Leu70 form a helical membrane-spanning segment. Over Arg71–Asp99 the chain is Cytoplasmic. The disordered stretch occupies residues Ser78 to Asp99.

It localises to the endoplasmic reticulum membrane. In Bos taurus (Bovine), this protein is Small integral membrane protein 14 (SMIM14).